The sequence spans 453 residues: Folate transporter 1 (453 aa).

N-linked (GlcNAc...) asparagine glycosylation is present at asparagine 36. The next 5 helical transmembrane spans lie at 48–68, 73–93, 102–122, 136–156, and 161–181; these read PYWT…TDIL, IVMI…FGKG, VSFG…YSIV, AAAL…ISTH, and LVLN…AIFL. Asparagine 260 is a glycosylation site (N-linked (GlcNAc...) asparagine). Transmembrane regions (helical) follow at residues 276 to 296, 306 to 326, 331 to 351, 368 to 388, and 401 to 421; these read VANG…SLFI, HGQM…YLCS, VLVA…LITA, IFGC…LVVV, and FVIY…FFMI.

The protein belongs to the reduced folate carrier (RFC) transporter (TC 2.A.48) family. As to expression, highly expressed in pharynx and posterior part of the intestine. Expressed at lower levels in the body wall muscles, head muscles, and vulva muscles. Highly expressed in the intestine of the early larva, levels decrease in the later stages of development.

The protein resides in the membrane. Folate transporter. The protein is Folate transporter 1 (folt-1) of Caenorhabditis elegans.